A 1470-amino-acid chain; its full sequence is Isonitrile lipopeptide synthase (1470 aa).

The tract at residues 584 to 603 (PEPESQEAARPTAPAPTAPA) is disordered. The Carrier domain occupies 974–1049 (AHDSTLERTI…ELARFLKQQE (76 aa)). At S1009 the chain carries O-(pantetheine 4'-phosphoryl)serine. Residues 1049-1059 (EQQAHAQVQPR) are compositionally biased toward low complexity. Residues 1049-1070 (EQQAHAQVQPRPAGPGLPPTLL) are disordered.

This sequence belongs to the ATP-dependent AMP-binding enzyme family. The cofactor is pantetheine 4'-phosphate.

The enzyme catalyses 2 a (3R)-3-isocyanyl-fatty acyl-[ACP] + L-lysine + ATP + 2 NADPH = an isonitrile lipopeptide + 2 holo-[ACP] + AMP + diphosphate + 2 NADP(+). It catalyses the reaction 2 (3R)-3-isocyanylbutanoyl-[ACP] + L-lysine + ATP + 2 NADPH = (2S)-2,6-bis[(3R)-3-isocyanobutanamido]hexan-1-ol + 2 holo-[ACP] + AMP + diphosphate + 2 NADP(+). Its function is as follows. Nonribosomal peptide synthetase (NRPS) involved in the biosynthesis of a unique class of isonitrile lipopeptides (INLPs). Catalyzes the final step in the pathway, i.e. the condensation of a (3R)-3-isocyanyl-fatty acyl-[ACP] to both amino groups of a lysine, producing isonitrile lipopeptides. Can use (3R)-3-isocyanylbutanoyl-[ACP] as substrate, leading to (2S)-2,6-bis[(3R)-3-isocyanobutanamido]hexan-1-ol. The sequence is that of Isonitrile lipopeptide synthase from Streptomyces coeruleorubidus.